Consider the following 232-residue polypeptide: Ferric nitrobindin-like protein (232 aa).

A compositionally biased stretch (polar residues) spans 1–10; that stretch reads MSENETSKTG. Residues 1–33 are disordered; the sequence is MSENETSKTGGNAGVPGSGADAPSLSDSPAISG. The GXWXGXG signature appears at 85 to 91; that stretch reads GVWRGEG.

Belongs to the nitrobindin family.

The protein is Ferric nitrobindin-like protein of Corynebacterium efficiens (strain DSM 44549 / YS-314 / AJ 12310 / JCM 11189 / NBRC 100395).